The chain runs to 310 residues: E3 ubiquitin-protein ligase AIP2 (310 aa).

The RING-type; atypical zinc finger occupies 230-271 (CCICKENLVIGDKMQELPCKHTFHPPCLKPWLDEHNSCPICR). Residues 276–306 (TDDQKYENWKEREKEAEEERKGAENAVRGGE) adopt a coiled-coil conformation. The segment covering 285 to 298 (KEREKEAEEERKGA) has biased composition (basic and acidic residues). Residues 285–310 (KEREKEAEEERKGAENAVRGGEYMYV) are disordered.

As to quaternary structure, interacts with ABI3 (via C-terminus). Post-translationally, auto-ubiquitinated. Highly expressed in leaves and at lower levels in flowers and seeds.

The protein resides in the nucleus. It localises to the cytoplasm. The catalysed reaction is S-ubiquitinyl-[E2 ubiquitin-conjugating enzyme]-L-cysteine + [acceptor protein]-L-lysine = [E2 ubiquitin-conjugating enzyme]-L-cysteine + N(6)-ubiquitinyl-[acceptor protein]-L-lysine.. The protein operates within protein modification; protein ubiquitination. Its function is as follows. E3 ubiquitin-protein ligase that acts as a negative regulator of abscisic acid (ABA) signaling. Mediates ubiquitination and subsequent proteasomal degradation of the transcription factor ABI3. The polypeptide is E3 ubiquitin-protein ligase AIP2 (AIP2) (Arabidopsis thaliana (Mouse-ear cress)).